The chain runs to 122 residues: Non-specific lipid-transfer protein (122 aa).

Positions 1-19 (MGVSRACFVVMVVVYMVVA) are cleaved as a signal peptide. The propeptide occupies 20–29 (ATPNVKLAEA). Disulfide bonds link C32–C81, C42–C58, C59–C104, and C79–C118.

Monomer.

Functionally, plant non-specific lipid-transfer proteins transfer phospholipids as well as galactolipids across membranes. May play a role in wax or cutin deposition in the cell walls of expanding epidermal cells and certain secretory tissues. Binds saturated fatty acids, unsaturated fatty acids, lysolipids and, with highest efficiency, jasmonic acid. Has weak antimicrobial activity against fungi. Inhibits spore germination and hyphae elongation in A.niger VKM F-2259 and N.crassa VKM F-184. Has no antibacterial activity against A.tumefaciens A281, C.michiganensis VKM Ac-144 and P.syringae VKM B-1546. The sequence is that of Non-specific lipid-transfer protein from Anethum graveolens (Dill).